The sequence spans 201 residues: Holliday junction branch migration complex subunit RuvA (201 aa).

Positions 1–63 (MIAFVSGTVA…EDSLTLYGFA (63 aa)) are domain I. The interval 64–139 (DDDERQVFEL…RLGEPIGAPA (76 aa)) is domain II. Positions 139 to 143 (AVGAP) are flexible linker. The segment at 144 to 201 (VSTGWRDQLHAALIGLGYATREADEAVSAVAPQAEAAGGTPQVGALLKAALQTLNRAR) is domain III.

The protein belongs to the RuvA family. In terms of assembly, homotetramer. Forms an RuvA(8)-RuvB(12)-Holliday junction (HJ) complex. HJ DNA is sandwiched between 2 RuvA tetramers; dsDNA enters through RuvA and exits via RuvB. An RuvB hexamer assembles on each DNA strand where it exits the tetramer. Each RuvB hexamer is contacted by two RuvA subunits (via domain III) on 2 adjacent RuvB subunits; this complex drives branch migration. In the full resolvosome a probable DNA-RuvA(4)-RuvB(12)-RuvC(2) complex forms which resolves the HJ.

It is found in the cytoplasm. In terms of biological role, the RuvA-RuvB-RuvC complex processes Holliday junction (HJ) DNA during genetic recombination and DNA repair, while the RuvA-RuvB complex plays an important role in the rescue of blocked DNA replication forks via replication fork reversal (RFR). RuvA specifically binds to HJ cruciform DNA, conferring on it an open structure. The RuvB hexamer acts as an ATP-dependent pump, pulling dsDNA into and through the RuvAB complex. HJ branch migration allows RuvC to scan DNA until it finds its consensus sequence, where it cleaves and resolves the cruciform DNA. This chain is Holliday junction branch migration complex subunit RuvA, found in Streptomyces coelicolor (strain ATCC BAA-471 / A3(2) / M145).